A 320-amino-acid chain; its full sequence is Methionyl-tRNA formyltransferase (320 aa).

Ser-114 to Pro-117 provides a ligand contact to (6S)-5,6,7,8-tetrahydrofolate.

It belongs to the Fmt family.

It carries out the reaction L-methionyl-tRNA(fMet) + (6R)-10-formyltetrahydrofolate = N-formyl-L-methionyl-tRNA(fMet) + (6S)-5,6,7,8-tetrahydrofolate + H(+). Attaches a formyl group to the free amino group of methionyl-tRNA(fMet). The formyl group appears to play a dual role in the initiator identity of N-formylmethionyl-tRNA by promoting its recognition by IF2 and preventing the misappropriation of this tRNA by the elongation apparatus. The sequence is that of Methionyl-tRNA formyltransferase from Acinetobacter baumannii (strain SDF).